The following is a 340-amino-acid chain: Heat-inducible transcription repressor HrcA (340 aa).

Belongs to the HrcA family.

Negative regulator of class I heat shock genes (grpE-dnaK-dnaJ and groELS operons). Prevents heat-shock induction of these operons. The protein is Heat-inducible transcription repressor HrcA of Chromobacterium violaceum (strain ATCC 12472 / DSM 30191 / JCM 1249 / CCUG 213 / NBRC 12614 / NCIMB 9131 / NCTC 9757 / MK).